The chain runs to 214 residues: Probable nicotinate-nucleotide adenylyltransferase (214 aa).

Belongs to the NadD family.

The catalysed reaction is nicotinate beta-D-ribonucleotide + ATP + H(+) = deamido-NAD(+) + diphosphate. The protein operates within cofactor biosynthesis; NAD(+) biosynthesis; deamido-NAD(+) from nicotinate D-ribonucleotide: step 1/1. Catalyzes the reversible adenylation of nicotinate mononucleotide (NaMN) to nicotinic acid adenine dinucleotide (NaAD). This Aeromonas salmonicida (strain A449) protein is Probable nicotinate-nucleotide adenylyltransferase.